Consider the following 295-residue polypeptide: MLSDSDRVRVLSEALPYLQAFAGRTFVVKYGGAAMKEEQLKDSVIRDIVFLSYVGIRPVVVHGGGPEINTWLAKLNIEPQFKNGLRVTDAATMDVVEMVLVGRVNKEIVTLINQAGGQAVGLCGKDGNLIRARAKGEESIGFVGEVQGVDTRVITALVEKGYIPVISSVAADDTGQAYNINADTVAGEIAAALGAEKLILLTDTAGILRDYRDPSTLIYRLDIAEARQLIKDGVVSGGMIPKVTCCVRSLAQGVKAAHIIDGRVPHALLLEIFTDSGIGSMLVGSNAAYDSAFSG.

Substrate-binding positions include Gly-64–Gly-65, Arg-86, and Asn-179.

Belongs to the acetylglutamate kinase family. ArgB subfamily.

It localises to the cytoplasm. It carries out the reaction N-acetyl-L-glutamate + ATP = N-acetyl-L-glutamyl 5-phosphate + ADP. Its pathway is amino-acid biosynthesis; L-arginine biosynthesis; N(2)-acetyl-L-ornithine from L-glutamate: step 2/4. Functionally, catalyzes the ATP-dependent phosphorylation of N-acetyl-L-glutamate. In Thermosynechococcus vestitus (strain NIES-2133 / IAM M-273 / BP-1), this protein is Acetylglutamate kinase.